We begin with the raw amino-acid sequence, 752 residues long: Phosphoribosylformylglycinamidine synthase subunit PurL (752 aa).

The active site involves H58. ATP-binding residues include Y61 and K103. E105 contributes to the Mg(2+) binding site. Substrate-binding positions include 106–109 (SHNH) and R128. Residue H107 is the Proton acceptor of the active site. A Mg(2+)-binding site is contributed by D129. Substrate is bound at residue Q253. Residue D281 coordinates Mg(2+). Substrate is bound at residue 325 to 327 (ESQ). 2 residues coordinate ATP: D513 and G550. N551 lines the Mg(2+) pocket. A substrate-binding site is contributed by S553.

It belongs to the FGAMS family. In terms of assembly, monomer. Part of the FGAM synthase complex composed of 1 PurL, 1 PurQ and 2 PurS subunits.

The protein resides in the cytoplasm. It carries out the reaction N(2)-formyl-N(1)-(5-phospho-beta-D-ribosyl)glycinamide + L-glutamine + ATP + H2O = 2-formamido-N(1)-(5-O-phospho-beta-D-ribosyl)acetamidine + L-glutamate + ADP + phosphate + H(+). It functions in the pathway purine metabolism; IMP biosynthesis via de novo pathway; 5-amino-1-(5-phospho-D-ribosyl)imidazole from N(2)-formyl-N(1)-(5-phospho-D-ribosyl)glycinamide: step 1/2. Its function is as follows. Part of the phosphoribosylformylglycinamidine synthase complex involved in the purines biosynthetic pathway. Catalyzes the ATP-dependent conversion of formylglycinamide ribonucleotide (FGAR) and glutamine to yield formylglycinamidine ribonucleotide (FGAM) and glutamate. The FGAM synthase complex is composed of three subunits. PurQ produces an ammonia molecule by converting glutamine to glutamate. PurL transfers the ammonia molecule to FGAR to form FGAM in an ATP-dependent manner. PurS interacts with PurQ and PurL and is thought to assist in the transfer of the ammonia molecule from PurQ to PurL. This Streptomyces coelicolor (strain ATCC BAA-471 / A3(2) / M145) protein is Phosphoribosylformylglycinamidine synthase subunit PurL.